A 548-amino-acid polypeptide reads, in one-letter code: T-complex protein 1 subunit theta (548 aa).

Positions 527-548 (QATGGPKPRGPKAQDEDDDGMA) are disordered.

It belongs to the TCP-1 chaperonin family. Heterooligomeric complex.

It localises to the cytoplasm. In terms of biological role, molecular chaperone; assists the folding of proteins upon ATP hydrolysis. Known to play a role, in vitro, in the folding of actin and tubulin. Required for correct subcellular localization of pgl-1. The polypeptide is T-complex protein 1 subunit theta (cct-8) (Caenorhabditis elegans).